The chain runs to 656 residues: MASTDYSTYSQAAAQQGYSAYTAQPTQGYAQTTQAYGQQSYGTYGQPTDVSYTQAQTTATYGQTAYATSYGQPPTGYTTPTAPQAYSQPVQGYGTGAYDTTTATVTTTQASYAAQSAYGTQPAYPAYGQQPAATAPTRPQDGNKPTETSQPQSSTGGYNQPSLGYGQSNYSYPQVPGSYPMQPVTAPPSYPPTSYSSTQPTSYDQSSYSQQNTYGQPSSYGQQSSYGQQSSYGQQPPTSYPPQTGSYSQAPSQYSQQSSSYGQQSSFRQDHPSSMGVYGQESGGFSGPGENRSMSGPDNRGRGRGGFDRGGMSRGGRGGGRGGMGSAGERGGFNKPGGPMDEGPDLDLGPPVDPDEDSDNSAIYVQGLNDSVTLDDLADFFKQCGVVKMNKRTGQPMIHIYLDKETGKPKGDATVSYEDPPTAKAAVEWFDGKDFQGSKLKVSLARKKPPMNSMRGGLPPREGRGMPPPLRGGPGGPGGPGGPMGRMGGRGGDRGGFPPRGPRGSRGNPSGGGNVQHRAGDWQCPNPGCGNQNFAWRTECNQCKAPKPEGFLPPPFPPPGGDRGRGGPGGMRGGRGGLMDRGGPGGMFRGGRGGDRGGFRGGRGMDRGGFGGGRRGGPGGPPGPLMEQMGGRRGGRGGPGKMDKGEHRQERRDRPY.

The EAD (Gln/Pro/Thr-rich) stretch occupies residues 1-285; that stretch reads MASTDYSTYS…GVYGQESGGF (285 aa). 31 consecutive repeat copies span residues 8–16, 17–27, 28–34, 35–42, 43–50, 51–59, 60–68, 69–75, 76–84, 85–91, 92–110, 111–116, 117–125, 126–156, 157–163, 164–170, 171–177, 178–188, 189–193, 194–201, 202–206, 207–212, 213–218, 219–224, 225–230, 231–238, 239–245, 246–252, 253–259, 260–276, and 277–285. The tract at residues 8–285 is 31 X approximate tandem repeats; the sequence is TYSQAAAQQG…GVYGQESGGF (278 aa). The segment covering 123–137 has biased composition (low complexity); the sequence is AYPAYGQQPAATAPT. Residues 123–360 form a disordered region; it reads AYPAYGQQPA…PVDPDEDSDN (238 aa). Over residues 143 to 172 the composition is skewed to polar residues; the sequence is NKPTETSQPQSSTGGYNQPSLGYGQSNYSY. The segment covering 192–266 has biased composition (low complexity); sequence PTSYSSTQPT…QSSSYGQQSS (75 aa). An IQ domain is found at 256 to 285; it reads QQSSSYGQQSSFRQDHPSSMGVYGQESGGF. Phosphoserine; by PKC is present on Ser266. An asymmetric dimethylarginine mark is found at Arg300, Arg302, Arg304, Arg309, Arg314, Arg317, and Arg321. A compositionally biased stretch (gly residues) spans 308–335; it reads DRGGMSRGGRGGGRGGMGSAGERGGFNK. The span at 336 to 350 shows a compositional bias: low complexity; it reads PGGPMDEGPDLDLGP. The RRM domain maps to 361–447; it reads SAIYVQGLND…SKLKVSLARK (87 aa). Lys439 carries the post-translational modification N6-acetyllysine. Disordered regions lie at residues 448–525 and 547–656; these read KPPM…WQCP and KPEG…DRPY. Asymmetric dimethylarginine is present on residues Arg455 and Arg464. Arg471 is modified (asymmetric dimethylarginine; alternate). At Arg471 the chain carries Omega-N-methylarginine; alternate. Residues 472–490 are compositionally biased toward gly residues; sequence GGPGGPGGPGGPMGRMGGR. Arg486 carries the post-translational modification Omega-N-methylarginine. Arg490 carries the post-translational modification Asymmetric dimethylarginine; by PRMT8. 3 positions are modified to asymmetric dimethylarginine: Arg494, Arg500, and Arg503. Residue Arg506 is modified to Asymmetric dimethylarginine; alternate. The residue at position 506 (Arg506) is an Omega-N-methylarginine; alternate. Residues 518 to 549 form a RanBP2-type zinc finger; it reads RAGDWQCPNPGCGNQNFAWRTECNQCKAPKPE. Residues 551–560 are compositionally biased toward pro residues; sequence FLPPPFPPPG. An asymmetric dimethylarginine mark is found at Arg563 and Arg565. Gly residues predominate over residues 566-591; the sequence is GGPGGMRGGRGGLMDRGGPGGMFRGG. Arg572 carries the asymmetric dimethylarginine; alternate; by PRMT8 modification. Arg572 carries the omega-N-methylarginine; alternate; by PRMT8 modification. 4 positions are modified to asymmetric dimethylarginine: Arg575, Arg581, Arg589, and Arg592. The segment covering 592 to 606 has biased composition (basic and acidic residues); the sequence is RGGDRGGFRGGRGMD. Position 596 is an asymmetric dimethylarginine; alternate; by PRMT8 (Arg596). At Arg596 the chain carries Omega-N-methylarginine; alternate; by PRMT8. Arg600 carries the post-translational modification Asymmetric dimethylarginine. At Arg603 the chain carries Asymmetric dimethylarginine; by PRMT8. Arg607 bears the Asymmetric dimethylarginine; alternate; by PRMT8 mark. Omega-N-methylarginine; alternate; by PRMT8 is present on Arg607. A compositionally biased stretch (gly residues) spans 607–618; that stretch reads RGGFGGGRRGGP. Asymmetric dimethylarginine; alternate is present on Arg615. Arg615 is subject to Omega-N-methylarginine; alternate. Residues Arg633 and Arg636 each carry the asymmetric dimethylarginine modification. A Nuclear localization signal motif is present at residues 639 to 656; it reads PGKMDKGEHRQERRDRPY. A compositionally biased stretch (basic and acidic residues) spans 641–656; the sequence is KMDKGEHRQERRDRPY.

Belongs to the RRM TET family. In terms of assembly, binds POLR2C, SF1, calmodulin and RNA. Interacts with PTK2B/FAK2 and TDRD3. Binds calmodulin in the presence, but not in the absence, of calcium ion. Forms a complex with REC8, PRDM9, SYCP3 and SYCP1; complex formation is dependent of phosphorylated form of REC8 and requires PRDM9 bound to hotspot DNA; EWSR1 joins PRDM9 with the chromosomal axis through REC8. Post-translationally, phosphorylated; calmodulin-binding inhibits phosphorylation of Ser-266. Highly methylated on arginine residues. Methylation is mediated by PRMT1 and, at lower level by PRMT8. As to expression, ubiquitous.

The protein resides in the nucleus. It is found in the cytoplasm. The protein localises to the cell membrane. Binds to ssRNA containing the consensus sequence 5'-AGGUAA-3'. Might normally function as a transcriptional repressor. EWS-fusion-proteins (EFPS) may play a role in the tumorigenic process. They may disturb gene expression by mimicking, or interfering with the normal function of CTD-POLII within the transcription initiation complex. They may also contribute to an aberrant activation of the fusion protein target genes. In Homo sapiens (Human), this protein is RNA-binding protein EWS (EWSR1).